The primary structure comprises 97 residues: Co-chaperonin GroES (97 aa).

The protein belongs to the GroES chaperonin family. In terms of assembly, heptamer of 7 subunits arranged in a ring. Interacts with the chaperonin GroEL.

It is found in the cytoplasm. In terms of biological role, together with the chaperonin GroEL, plays an essential role in assisting protein folding. The GroEL-GroES system forms a nano-cage that allows encapsulation of the non-native substrate proteins and provides a physical environment optimized to promote and accelerate protein folding. GroES binds to the apical surface of the GroEL ring, thereby capping the opening of the GroEL channel. The polypeptide is Co-chaperonin GroES (Buchnera aphidicola subsp. Pterocomma populeum).